Reading from the N-terminus, the 573-residue chain is MLWRDVCEIFNKIEKTTKRLEKRDYFIKLIDMVKEKGKPEDLKKICYMAIGRVYPEYDERELGIGEKLLINAVTSIGIKKDELLEKIKETGDIGLAIEQLKSKIKQASLFFQPLTVDEVYETLKRVGEIEGEGSQKKKLRLISSLFLRASPIECRYLARLILEDMRIGMNVPTILDALSVYFNVPKEKLEKIYAITNDIGLLAEKLLMGDLESEELKLKLFRPIKPMLAQLTPSIEEALLEMGRAQFETKYDGARVQIHKDGNKVKIYSRRLEDVTNALPEIVEAVKNINVDKLIVEGECVAIDKQTGKPRPFQDILRRFRRKYDIGKMMKEINLRVYLFDILYKDGVSFIDEEFEKRRKVLEEIVGYENDWRTERKRIEKELKSDKIIDISYKLVTNDAKEAREFYNWSLSIGHEGVMIKNLKAPYTPGSRVRTMYKFKPTLESLDVVITKAKRGMGKRKDWYGSFEICVRDEEGNLYPIGHVGTGLTEADLEFLKEEIDKIIIRDLGEEVEVEPKIVIEVAYEEIQKSDKYPCGYALRFPRVVRFRFDKGVNEINTIEDVERIYEIQRGRK.

Residue E248 participates in ATP binding. Residue K250 is the N6-AMP-lysine intermediate of the active site. The ATP site is built by R255, R270, E299, F340, R432, and K438.

This sequence belongs to the ATP-dependent DNA ligase family. The cofactor is Mg(2+).

The enzyme catalyses ATP + (deoxyribonucleotide)n-3'-hydroxyl + 5'-phospho-(deoxyribonucleotide)m = (deoxyribonucleotide)n+m + AMP + diphosphate.. In terms of biological role, DNA ligase that seals nicks in double-stranded DNA during DNA replication, DNA recombination and DNA repair. This chain is DNA ligase, found in Methanocaldococcus jannaschii (strain ATCC 43067 / DSM 2661 / JAL-1 / JCM 10045 / NBRC 100440) (Methanococcus jannaschii).